The chain runs to 269 residues: Protein TIFY 11B (269 aa).

In terms of domain architecture, Tify spans 100 to 135 (PESGNSQLTIFFGGKVMVFNEFPEDKAKEIMEVAKE). The tract at residues 160 to 181 (PDLNEPTSSGNNEDQETGQQHQ) is disordered. Positions 164 to 181 (EPTSSGNNEDQETGQQHQ) are enriched in polar residues. A Jas motif is present at residues 186–210 (IARRASLHRFFAKRKDRAVARAPYQ). The Nuclear localization signal signature appears at 187–194 (ARRASLHR). The disordered stretch occupies residues 209 to 269 (YQVNQHGSHL…QSSKNLELKL (61 aa)). Residues 250–269 (MPMEVDKKEGQSSKNLELKL) show a composition bias toward basic and acidic residues.

Belongs to the TIFY/JAZ family. In terms of assembly, homo- and heterodimer. Interacts with MYC2, AFPH2/NINJA, TIFY10A/JAZ1, TIFY10B/JAZ2, TIFY11A/JAZ5, TIFY5A/JAZ8, TIFY9/JAZ10 and TIFY3B/JAZ12. As to quaternary structure, (Microbial infection) Interacts with the pathogenic Pseudomonas syringae HopZ1a protein. Post-translationally, (Microbial infection) Acetylated by Pseudomonas syringae HopZ1a. In terms of processing, ubiquitinated. Targeted for degradation by the SCF(COI1) E3 ubiquitin ligase-proteasome pathway during jasmonate signaling.

It localises to the nucleus. Its subcellular location is the cell membrane. In terms of biological role, repressor of jasmonate responses. The sequence is that of Protein TIFY 11B from Arabidopsis thaliana (Mouse-ear cress).